We begin with the raw amino-acid sequence, 309 residues long: Porphobilinogen deaminase (309 aa).

The residue at position 242 (Cys242) is an S-(dipyrrolylmethanemethyl)cysteine.

This sequence belongs to the HMBS family. Monomer. The cofactor is dipyrromethane.

The enzyme catalyses 4 porphobilinogen + H2O = hydroxymethylbilane + 4 NH4(+). It participates in porphyrin-containing compound metabolism; protoporphyrin-IX biosynthesis; coproporphyrinogen-III from 5-aminolevulinate: step 2/4. Tetrapolymerization of the monopyrrole PBG into the hydroxymethylbilane pre-uroporphyrinogen in several discrete steps. This is Porphobilinogen deaminase from Legionella pneumophila subsp. pneumophila (strain Philadelphia 1 / ATCC 33152 / DSM 7513).